Reading from the N-terminus, the 125-residue chain is Ribonuclease P protein component (125 aa).

Belongs to the RnpA family. As to quaternary structure, consists of a catalytic RNA component (M1 or rnpB) and a protein subunit.

The catalysed reaction is Endonucleolytic cleavage of RNA, removing 5'-extranucleotides from tRNA precursor.. RNaseP catalyzes the removal of the 5'-leader sequence from pre-tRNA to produce the mature 5'-terminus. It can also cleave other RNA substrates such as 4.5S RNA. The protein component plays an auxiliary but essential role in vivo by binding to the 5'-leader sequence and broadening the substrate specificity of the ribozyme. This is Ribonuclease P protein component from Clostridium perfringens (strain ATCC 13124 / DSM 756 / JCM 1290 / NCIMB 6125 / NCTC 8237 / Type A).